A 103-amino-acid chain; its full sequence is Small ribosomal subunit protein uS10 (103 aa).

This sequence belongs to the universal ribosomal protein uS10 family. Part of the 30S ribosomal subunit.

Functionally, involved in the binding of tRNA to the ribosomes. The chain is Small ribosomal subunit protein uS10 from Stenotrophomonas maltophilia (strain R551-3).